A 151-amino-acid polypeptide reads, in one-letter code: 3-hydroxyacyl-[acyl-carrier-protein] dehydratase FabZ (151 aa).

His54 is an active-site residue.

It belongs to the thioester dehydratase family. FabZ subfamily.

The protein resides in the cytoplasm. It carries out the reaction a (3R)-hydroxyacyl-[ACP] = a (2E)-enoyl-[ACP] + H2O. In terms of biological role, involved in unsaturated fatty acids biosynthesis. Catalyzes the dehydration of short chain beta-hydroxyacyl-ACPs and long chain saturated and unsaturated beta-hydroxyacyl-ACPs. This Blochmanniella floridana protein is 3-hydroxyacyl-[acyl-carrier-protein] dehydratase FabZ.